The primary structure comprises 156 residues: Small ribosomal subunit protein uS7 (156 aa).

Belongs to the universal ribosomal protein uS7 family. In terms of assembly, part of the 30S ribosomal subunit. Contacts proteins S9 and S11.

In terms of biological role, one of the primary rRNA binding proteins, it binds directly to 16S rRNA where it nucleates assembly of the head domain of the 30S subunit. Is located at the subunit interface close to the decoding center, probably blocks exit of the E-site tRNA. The polypeptide is Small ribosomal subunit protein uS7 (Vibrio cholerae serotype O1 (strain ATCC 39315 / El Tor Inaba N16961)).